We begin with the raw amino-acid sequence, 590 residues long: Glutathione S-transferase T3 (590 aa).

One can recognise a GST N-terminal domain in the interval 1–82 (MKLKVYADRM…YLSSAYPSVV (82 aa)). Residues 11–12 (SQ), 40–41 (QL), 53–54 (KV), and 66–67 (ES) contribute to the glutathione site. Residues 89-232 (DLSKRARIHS…KDRCQKQREM (144 aa)) enclose the GST C-terminal domain. The region spanning 265–336 (DRRKHRRKWS…HCKQRWSKLN (72 aa)) is the Myb-like domain. The disordered stretch occupies residues 402–427 (SKGGGSSKRTKLNNGDRVYSSSSNPE).

It belongs to the GST superfamily. Theta family.

It is found in the nucleus. It catalyses the reaction RX + glutathione = an S-substituted glutathione + a halide anion + H(+). May be involved in the conjugation of reduced glutathione to a wide number of exogenous and endogenous hydrophobic electrophiles and have a detoxification role against certain herbicides. The chain is Glutathione S-transferase T3 (GSTT3) from Arabidopsis thaliana (Mouse-ear cress).